Consider the following 1376-residue polypeptide: Protein FAM135B (1376 aa).

Residues 431 to 442 are compositionally biased toward acidic residues; it reads NEDECEFSEESP. The interval 431–489 is disordered; the sequence is NEDECEFSEESPSENTHVGSKPHSIQSTTVHENASFEKPNVGTKAQEDCSTEGPEQGFD. A compositionally biased stretch (polar residues) spans 443–462; that stretch reads SENTHVGSKPHSIQSTTVHE.

It belongs to the FAM135 family.

The chain is Protein FAM135B (fam135b) from Xenopus laevis (African clawed frog).